Here is a 442-residue protein sequence, read N- to C-terminus: Divalent metal cation transporter MntH (442 aa).

11 helical membrane passes run 29 to 49 (MLAY…PGNW), 62 to 82 (TLLT…SLCV), 106 to 126 (FCLW…ELLG), 135 to 155 (FVIP…VLLF), 166 to 186 (ALVI…ILFS), 209 to 229 (MLYI…LYLH), 258 to 278 (FALS…AATF), 295 to 315 (LLSP…ALLA), 347 to 367 (LITR…FGEN), 372 to 392 (LIVL…IPLV), and 413 to 433 (LAWL…LQSL).

This sequence belongs to the NRAMP family.

It is found in the cell inner membrane. H(+)-stimulated, divalent metal cation uptake system. The chain is Divalent metal cation transporter MntH from Nostoc sp. (strain PCC 7120 / SAG 25.82 / UTEX 2576).